Here is a 350-residue protein sequence, read N- to C-terminus: DNA repair protein RAD51 homolog 2 (350 aa).

An interaction with RAD51C region spans residues 1–75 (MSSKKLRRVG…TAYELKTRRS (75 aa)). Position 108 to 115 (108 to 115 (GPPGCGKT)) interacts with ATP.

Belongs to the RecA family. RAD51 subfamily. Part of the BCDX2 complex consisting of RAD51B, RAD51C, RAD51D and XRCC2; the complex has a ring-like structure arranged into a flat disc around a central channel. The BCDX2 subcomplex RAD51B:RAD51C interacts with RAD51. Interacts with SWSAP1; involved in homologous recombination repair. Interacts with HELQ. Phosphorylated on tyrosine residues by BCR-ABL. Expressed in a wide range of tissues.

Its subcellular location is the nucleus. Its function is as follows. Involved in the homologous recombination repair (HRR) pathway of double-stranded DNA breaks arising during DNA replication or induced by DNA-damaging agents. May promote the assembly of presynaptic RAD51 nucleoprotein filaments. Binds single-stranded DNA and double-stranded DNA and has DNA-dependent ATPase activity. Part of the RAD51 paralog protein complex BCDX2 which acts in the BRCA1-BRCA2-dependent HR pathway. Upon DNA damage, BCDX2 acts downstream of BRCA2 recruitment and upstream of RAD51 recruitment. BCDX2 binds predominantly to the intersection of the four duplex arms of the Holliday junction and to junction of replication forks. The BCDX2 complex was originally reported to bind single-stranded DNA, single-stranded gaps in duplex DNA and specifically to nicks in duplex DNA. The BCDX2 subcomplex RAD51B:RAD51C exhibits single-stranded DNA-dependent ATPase activity suggesting an involvement in early stages of the HR pathway. The protein is DNA repair protein RAD51 homolog 2 (Rad51b) of Mus musculus (Mouse).